A 122-amino-acid chain; its full sequence is Large ribosomal subunit protein uL18 (122 aa).

The tract at residues Met-1–Arg-27 is disordered. Residues Gln-9–Leu-21 are compositionally biased toward basic residues.

Belongs to the universal ribosomal protein uL18 family. As to quaternary structure, part of the 50S ribosomal subunit; part of the 5S rRNA/L5/L18/L25 subcomplex. Contacts the 5S and 23S rRNAs.

Functionally, this is one of the proteins that bind and probably mediate the attachment of the 5S RNA into the large ribosomal subunit, where it forms part of the central protuberance. This chain is Large ribosomal subunit protein uL18, found in Prochlorococcus marinus (strain MIT 9303).